We begin with the raw amino-acid sequence, 139 residues long: MTYELKMPILGFDATKIELEKIDETFSKIRGLDGKQPFEITLINPFSLCDYAFTIPTADERLLDLDESRGDKVEVYCVVVLQKPIENSVVNLMAPFVFNPANACALQVTTLPVAEYPQFSKVLPLKEFLSKEILETLNR.

Belongs to the FliW family. As to quaternary structure, interacts with translational regulator CsrA and flagellin(s).

It is found in the cytoplasm. Functionally, acts as an anti-CsrA protein, binds CsrA and prevents it from repressing translation of its target genes, one of which is flagellin. Binds to flagellin and participates in the assembly of the flagellum. The sequence is that of Flagellar assembly factor FliW 2 from Helicobacter hepaticus (strain ATCC 51449 / 3B1).